Here is a 137-residue protein sequence, read N- to C-terminus: uncharacterized protein (137 aa).

In terms of domain architecture, HTH marR-type spans 5–136 (NRHLIHQINQ…FSHLFRMFLQ (132 aa)). Residues 51-74 (QKEIWSYLNVEAPTVTRTIKRLEE) constitute a DNA-binding region (H-T-H motif).

This is an uncharacterized protein from Bacillus subtilis (strain 168).